The following is a 490-amino-acid chain: Betaine aldehyde dehydrogenase (490 aa).

Positions 27 and 93 each coordinate K(+). 150–152 (GAW) provides a ligand contact to NAD(+). The active-site Charge relay system is lysine 162. 176 to 179 (KPSE) serves as a coordination point for NAD(+). A K(+)-binding site is contributed by valine 180. 230–233 (GTTT) contacts NAD(+). Leucine 246 serves as a coordination point for K(+). Catalysis depends on glutamate 252, which acts as the Proton acceptor. Residues glycine 254, cysteine 286, and glutamate 387 each contribute to the NAD(+) site. Residue cysteine 286 is the Nucleophile of the active site. Residue cysteine 286 is modified to Cysteine sulfenic acid (-SOH). Lysine 457 and glycine 460 together coordinate K(+). The active-site Charge relay system is glutamate 464.

This sequence belongs to the aldehyde dehydrogenase family. In terms of assembly, dimer of dimers. The cofactor is K(+).

It carries out the reaction betaine aldehyde + NAD(+) + H2O = glycine betaine + NADH + 2 H(+). Its pathway is amine and polyamine biosynthesis; betaine biosynthesis via choline pathway; betaine from betaine aldehyde: step 1/1. Its function is as follows. Involved in the biosynthesis of the osmoprotectant glycine betaine. Catalyzes the irreversible oxidation of betaine aldehyde to the corresponding acid. The polypeptide is Betaine aldehyde dehydrogenase (Pseudomonas putida (strain GB-1)).